The primary structure comprises 93 residues: Phosphoribosyl-ATP pyrophosphatase (93 aa).

The protein belongs to the PRA-PH family.

It localises to the cytoplasm. It carries out the reaction 1-(5-phospho-beta-D-ribosyl)-ATP + H2O = 1-(5-phospho-beta-D-ribosyl)-5'-AMP + diphosphate + H(+). The protein operates within amino-acid biosynthesis; L-histidine biosynthesis; L-histidine from 5-phospho-alpha-D-ribose 1-diphosphate: step 2/9. This is Phosphoribosyl-ATP pyrophosphatase from Mycolicibacterium gilvum (strain PYR-GCK) (Mycobacterium gilvum (strain PYR-GCK)).